Here is a 530-residue protein sequence, read N- to C-terminus: Trigger factor (530 aa).

One can recognise a PPIase FKBP-type domain in the interval 162–243; sequence DDLVTIDLAG…VTKVCEQELP (82 aa). The disordered stretch occupies residues 432-530; sequence NALELDRIQP…KTAAKDDKSK (99 aa). 2 stretches are compositionally biased toward basic and acidic residues: residues 459–478 and 501–512; these read SAEK…EKAP and KVVDAKSDDKPA.

The protein belongs to the FKBP-type PPIase family. Tig subfamily.

The protein localises to the cytoplasm. It catalyses the reaction [protein]-peptidylproline (omega=180) = [protein]-peptidylproline (omega=0). Functionally, involved in protein export. Acts as a chaperone by maintaining the newly synthesized protein in an open conformation. Functions as a peptidyl-prolyl cis-trans isomerase. This Cutibacterium acnes (strain DSM 16379 / KPA171202) (Propionibacterium acnes) protein is Trigger factor.